A 499-amino-acid chain; its full sequence is Alpha-amylase 3 (499 aa).

N127 and D183 together coordinate Ca(2+). The active-site Nucleophile is D213. H217 is a Ca(2+) binding site. The active-site Proton donor is E248.

The protein belongs to the glycosyl hydrolase 13 family. In terms of assembly, monomer. Ca(2+) is required as a cofactor.

It is found in the cytoplasm. It carries out the reaction Endohydrolysis of (1-&gt;4)-alpha-D-glucosidic linkages in polysaccharides containing three or more (1-&gt;4)-alpha-linked D-glucose units.. The polypeptide is Alpha-amylase 3 (amyC) (Dictyoglomus thermophilum (strain ATCC 35947 / DSM 3960 / H-6-12)).